The sequence spans 482 residues: Transcription factor Sox-9 (482 aa).

2 disordered regions span residues 1 to 66 and 160 to 274; these read MNLL…ETED and RLRI…FRDV. Over residues 30–41 the composition is skewed to low complexity; that stretch reads SAGSPCPSGSGS. Residues 42 to 52 show a composition bias toward polar residues; the sequence is DTENTRPQENT. Composition is skewed to basic and acidic residues over residues 56–66 and 160–174; these read GDPELKKETED and RLRI…DYKY. A Glycyl lysine isopeptide (Lys-Gly) (interchain with G-Cter in SUMO) cross-link involves residue K61. Positions 63 to 103 are dimerization (DIM); the sequence is ETEDEKFPVCIREAVSQVLKGYDWTLVPMPVRVNGSSKSKP. A PQA region spans residues 63 to 103; sequence ETEDEKFPVCIREAVSQVLKGYDWTLVPMPVRVNGSSKSKP. A DNA-binding region (HMG box) is located at residues 105–173; that stretch reads VKRPMNAFMV…QHKKDHPDYK (69 aa). Polar residues predominate over residues 211 to 220; sequence SPHSASSMSE. The tract at residues 224–308 is transactivation domain (TAM); the sequence is PGEHSGQSQG…LPPNGHPGVG (85 aa). 2 short sequence motifs (9aaTAD) span residues 276–285 and 291–299; these read IGELSSEVIS and DVNEFDQYL. The tract at residues 295–395 is disordered; that stretch reads FDQYLPPNGH…HSPQQLNYSS (101 aa). 2 stretches are compositionally biased toward polar residues: residues 308-326 and 351-366; these read GSTQ…TPSA and HSLS…SQQR. The interval 366–482 is transactivation domain (TAC); sequence RTHIKTEQLS…QPVYTQLTRP (117 aa). K370 is covalently cross-linked (Glycyl lysine isopeptide (Lys-Gly) (interchain with G-Cter in SUMO)). Residues 375 to 390 are compositionally biased toward low complexity; that stretch reads SPSHYSDQQQQHSPQQ. Positions 433–441 match the 9aaTAD 3 motif; that stretch reads SGLYSNFSY. Positions 448–482 are disordered; that stretch reads PMYTPIADTTGVPSIPQTHSPQHWEQPVYTQLTRP. Polar residues predominate over residues 458 to 482; that stretch reads GVPSIPQTHSPQHWEQPVYTQLTRP.

As to quaternary structure, interacts with the sumoylation factors ube2i/ubc9 and sumo1. Sumoylated. Lys-370 is the major site of sumoylation, although sumoylation at Lys-61 also occurs. Sumoylation plays a key role in regulating formation of the neural crest and otic placode. As to expression, expressed in both male and female gonads from after metamorphosis through to adult stages. In the testis, expression is restricted to the supporting Sertoli-like cells. Conversely in the ovary, expression is localized to primary oocytes (at protein level). In developing limbs, expressed before chrondrocytes form (stage 52 tadpoles) and throughout the cartilaginous anlagen until stage 56, after which expression ceases in the enlarged cells of the diaphysis. At later stages, expression continues in the chondrocytes of the epiphysis and metaphysis, and weak expression is seen in most of the diaphysis.

Its subcellular location is the nucleus. It is found in the cytoplasm. Functionally, transcription factor that plays a key role in chondrocytes differentiation and skeletal development. Specifically binds the 5'-ACAAAG-3' DNA motif present in enhancers and super-enhancers and promotes expression of genes important for chondrogenesis, including COL2A1. Plays a central role in successive steps of chondrocyte differentiation. Absolutely required for precartilaginous condensation, the first step in chondrogenesis during which skeletal progenitors differentiate into prechondrocytes. Together with SOX5 and SOX6, required for overt chondrogenesis when condensed prechondrocytes differentiate into early stage chondrocytes, the second step in chondrogenesis. Later, required to direct hypertrophic maturation and block osteoblast differentiation of growth plate chondrocytes: maintains chondrocyte columnar proliferation, delays prehypertrophy and then prevents osteoblastic differentiation of chondrocytes. Also required for chondrocyte hypertrophy, both indirectly, by keeping the lineage fate of chondrocytes, and directly, by remaining present in upper hypertrophic cells. Low lipid levels are the main nutritional determinant for chondrogenic commitment of skeletal progenitor cells: when lipids levels are low, FOXO transcription factors promote expression of SOX9, which induces chondrogenic commitment and suppresses fatty acid oxidation. In addition to cartilage development, also acts as a regulator of proliferation and differentiation in epithelial stem/progenitor cells. Unlikely to play a role in sex determination but may function during testicular and ovarian differentiation. The polypeptide is Transcription factor Sox-9 (Xenopus tropicalis (Western clawed frog)).